The sequence spans 253 residues: tRNA pseudouridine synthase A (253 aa).

Asp52 serves as the catalytic Nucleophile. Tyr111 is a binding site for substrate.

It belongs to the tRNA pseudouridine synthase TruA family. In terms of assembly, homodimer.

The enzyme catalyses uridine(38/39/40) in tRNA = pseudouridine(38/39/40) in tRNA. Functionally, formation of pseudouridine at positions 38, 39 and 40 in the anticodon stem and loop of transfer RNAs. The protein is tRNA pseudouridine synthase A of Methylobacterium radiotolerans (strain ATCC 27329 / DSM 1819 / JCM 2831 / NBRC 15690 / NCIMB 10815 / 0-1).